Consider the following 169-residue polypeptide: Photosystem I assembly protein Ycf3 (169 aa).

TPR repeat units lie at residues Ala-35–Pro-68, Ser-72–Leu-105, and Gly-120–Asn-153.

It belongs to the Ycf3 family.

Its subcellular location is the plastid. The protein localises to the chloroplast thylakoid membrane. Essential for the assembly of the photosystem I (PSI) complex. May act as a chaperone-like factor to guide the assembly of the PSI subunits. The protein is Photosystem I assembly protein Ycf3 of Pinus koraiensis (Korean pine).